We begin with the raw amino-acid sequence, 290 residues long: Phycobilisome 32.3 kDa linker polypeptide, phycocyanin-associated, rod (290 aa).

The region spanning 1 to 179 (MPVTVAASRL…LQRGYANSDR (179 aa)) is the PBS-linker domain. The 53-residue stretch at 236-288 (DQVVRVEVAALSTPRYPRIRRSSRVFFVPVSRLSQKLQEIQRMGGRVASISPA) folds into the CpcD-like domain.

It belongs to the phycobilisome linker protein family.

It is found in the cellular thylakoid membrane. In terms of biological role, rod linker protein, associated with phycocyanin. Linker polypeptides determine the state of aggregation and the location of the disk-shaped phycobiliprotein units within the phycobilisome and modulate their spectroscopic properties in order to mediate a directed and optimal energy transfer. This Picosynechococcus sp. (strain ATCC 27264 / PCC 7002 / PR-6) (Agmenellum quadruplicatum) protein is Phycobilisome 32.3 kDa linker polypeptide, phycocyanin-associated, rod (cpcC).